The following is a 579-amino-acid chain: MYVTFNEALDSSFGNLESPNHDFKVGDPNMVPTPPMDSDSAAISLAFLISLSITFAILMLILVVIAAYVTFCGDDESEYDEENALGTRTSGTLHSLFGKKHSGILLDSSFASPGGFDDEIVLQERELEELPKMSAYEVELYIRAKEFQMMSPPMVKDFGTYLDSDDQQFIKDRGIQSYFLLPSINDNIDEYGNFLPSFIVQDKLDIQFSKFNKSSSTVMNYPLPHNRKDAVYFEVKIFRHIQKSNSIFSIGLTTVPYPYFRVPGMAKYSIAYESTGKLRINNPFTASTLLPKLEEGDTVGFGYRYKTGTIFITHNGKKLMDVTQNIGIDLFIGIGAFNAAYTRTYTRDGLLEDPDNVSFREALSEGKDIEVAKDLQRVHDPHDDSDEMTSDEVELHVNLGQVGFVFIEANVKKYAFGSVYGQIGIPPAYNGTEIKKDTILQKGEELPPRYADTDNFFGSMKVKEGSSSRITAQTSKPLWSVGTYERISSNFDRENNVYHDSLETDDNNTDNNVNNNDENAGCNENSPLLEDDGNKRPENSNTPREVSDGAINKNPRNKSTKKRQRNRGKSSKKKNRSRK.

Residues 1–44 (MYVTFNEALDSSFGNLESPNHDFKVGDPNMVPTPPMDSDSAAIS) lie on the Cytoplasmic side of the membrane. The helical; Signal-anchor for type II membrane protein transmembrane segment at 45–65 (LAFLISLSITFAILMLILVVI) threads the bilayer. The Lumenal segment spans residues 66-579 (AAYVTFCGDD…SSKKKNRSRK (514 aa)). The 199-residue stretch at 166 to 364 (DQQFIKDRGI…DNVSFREALS (199 aa)) folds into the B30.2/SPRY domain. 2 N-linked (GlcNAc...) asparagine glycosylation sites follow: N212 and N356. The residue at position 358 (S358) is a Phosphoserine. A Glycyl lysine isopeptide (Lys-Gly) (interchain with G-Cter in ubiquitin) cross-link involves residue K367. N-linked (GlcNAc...) asparagine glycans are attached at residues N430 and N507. The segment at 499–579 (HDSLETDDNN…SSKKKNRSRK (81 aa)) is disordered. Positions 509 to 525 (TDNNVNNNDENAGCNEN) are enriched in low complexity. Positions 555–579 (PRNKSTKKRQRNRGKSSKKKNRSRK) are enriched in basic residues. N-linked (GlcNAc...) asparagine glycosylation is found at N557 and N575.

The protein belongs to the SSH4 family.

It localises to the vacuole membrane. The protein resides in the endosome membrane. Functionally, components of the endosome-vacuole trafficking pathway that regulates nutrient transport. May be involved in processes which determine whether plasma membrane proteins are degraded or routed to the plasma membrane. Confers leflunomide resistance when overexpressed. This Saccharomyces cerevisiae (strain YJM789) (Baker's yeast) protein is Protein SSH4 (SSH4).